A 458-amino-acid chain; its full sequence is tRNA modification GTPase MnmE (458 aa).

The (6S)-5-formyl-5,6,7,8-tetrahydrofolate site is built by Arg26, Glu88, and Arg127. Residues 224–378 enclose the TrmE-type G domain; sequence GLSTAIIGRP…IEDRINQLFF (155 aa). Asn234 contributes to the K(+) binding site. GTP is bound by residues 234–239, 253–259, and 278–281; these read NVGKSS, TDIAGTT, and DTAG. Ser238 is a Mg(2+) binding site. Thr253, Ile255, and Thr258 together coordinate K(+). A Mg(2+)-binding site is contributed by Thr259. Residue Lys458 participates in (6S)-5-formyl-5,6,7,8-tetrahydrofolate binding.

It belongs to the TRAFAC class TrmE-Era-EngA-EngB-Septin-like GTPase superfamily. TrmE GTPase family. Homodimer. Heterotetramer of two MnmE and two MnmG subunits. K(+) is required as a cofactor.

It is found in the cytoplasm. Exhibits a very high intrinsic GTPase hydrolysis rate. Involved in the addition of a carboxymethylaminomethyl (cmnm) group at the wobble position (U34) of certain tRNAs, forming tRNA-cmnm(5)s(2)U34. This chain is tRNA modification GTPase MnmE, found in Streptococcus pyogenes serotype M18 (strain MGAS8232).